The following is a 210-amino-acid chain: Cell division protein SepF (210 aa).

The segment at 13–101 is disordered; it reads GLADGDEYDE…EPVDPGYRAP (89 aa). Basic and acidic residues-rich tracts occupy residues 22–70 and 83–93; these read EQPR…ERPE and VEPRRPARPEP.

The protein belongs to the SepF family. As to quaternary structure, homodimer. Interacts with FtsZ.

The protein resides in the cytoplasm. Cell division protein that is part of the divisome complex and is recruited early to the Z-ring. Probably stimulates Z-ring formation, perhaps through the cross-linking of FtsZ protofilaments. Its function overlaps with FtsA. In Micrococcus luteus (strain ATCC 4698 / DSM 20030 / JCM 1464 / CCM 169 / CCUG 5858 / IAM 1056 / NBRC 3333 / NCIMB 9278 / NCTC 2665 / VKM Ac-2230) (Micrococcus lysodeikticus), this protein is Cell division protein SepF.